We begin with the raw amino-acid sequence, 309 residues long: Probable cell division protein kinase ECU11_1290 (309 aa).

Residues 4 to 288 (YENIKQVGEG…VISSHKNTYI (285 aa)) enclose the Protein kinase domain. ATP is bound by residues 10 to 18 (VGEGAFGQV) and Lys-33. The active-site Proton acceptor is the Asp-124.

This sequence belongs to the protein kinase superfamily. CMGC Ser/Thr protein kinase family. CDC2/CDKX subfamily.

It is found in the nucleus. It catalyses the reaction L-seryl-[protein] + ATP = O-phospho-L-seryl-[protein] + ADP + H(+). The enzyme catalyses L-threonyl-[protein] + ATP = O-phospho-L-threonyl-[protein] + ADP + H(+). May play a role in the control of the eukaryotic cell cycle. The sequence is that of Probable cell division protein kinase ECU11_1290 from Encephalitozoon cuniculi (strain GB-M1) (Microsporidian parasite).